We begin with the raw amino-acid sequence, 187 residues long: Elongation factor P (187 aa).

Lys33 bears the N6-(3,6-diaminohexanoyl)-5-hydroxylysine mark.

It belongs to the elongation factor P family. May be beta-lysylated on the epsilon-amino group of Lys-33 by the combined action of EpmA and EpmB, and then hydroxylated on the C5 position of the same residue by EpmC (if this protein is present). Lysylation is critical for the stimulatory effect of EF-P on peptide-bond formation. The lysylation moiety may extend toward the peptidyltransferase center and stabilize the terminal 3-CCA end of the tRNA. Hydroxylation of the C5 position on Lys-33 may allow additional potential stabilizing hydrogen-bond interactions with the P-tRNA.

It is found in the cytoplasm. The protein operates within protein biosynthesis; polypeptide chain elongation. In terms of biological role, involved in peptide bond synthesis. Alleviates ribosome stalling that occurs when 3 or more consecutive Pro residues or the sequence PPG is present in a protein, possibly by augmenting the peptidyl transferase activity of the ribosome. Modification of Lys-33 is required for alleviation. The protein is Elongation factor P of Blochmanniella floridana.